The primary structure comprises 797 residues: Inactive deaminase YBR284W (797 aa).

Residues 627–647 traverse the membrane as a helical segment; sequence LVYLFYLSQIPMVVAPLNSIV.

This sequence belongs to the metallo-dependent hydrolases superfamily. Adenosine and AMP deaminases family.

It is found in the membrane. In Saccharomyces cerevisiae (strain ATCC 204508 / S288c) (Baker's yeast), this protein is Inactive deaminase YBR284W.